We begin with the raw amino-acid sequence, 478 residues long: Protein nucleotidyltransferase YdiU (478 aa).

Positions 84, 86, 87, 107, 119, 120, 170, and 177 each coordinate ATP. The Proton acceptor role is filled by D246. Mg(2+) is bound by residues N247 and D256. D256 provides a ligand contact to ATP.

It belongs to the SELO family. Mg(2+) is required as a cofactor. Requires Mn(2+) as cofactor.

It carries out the reaction L-seryl-[protein] + ATP = 3-O-(5'-adenylyl)-L-seryl-[protein] + diphosphate. The catalysed reaction is L-threonyl-[protein] + ATP = 3-O-(5'-adenylyl)-L-threonyl-[protein] + diphosphate. It catalyses the reaction L-tyrosyl-[protein] + ATP = O-(5'-adenylyl)-L-tyrosyl-[protein] + diphosphate. The enzyme catalyses L-histidyl-[protein] + UTP = N(tele)-(5'-uridylyl)-L-histidyl-[protein] + diphosphate. It carries out the reaction L-seryl-[protein] + UTP = O-(5'-uridylyl)-L-seryl-[protein] + diphosphate. The catalysed reaction is L-tyrosyl-[protein] + UTP = O-(5'-uridylyl)-L-tyrosyl-[protein] + diphosphate. Its function is as follows. Nucleotidyltransferase involved in the post-translational modification of proteins. It can catalyze the addition of adenosine monophosphate (AMP) or uridine monophosphate (UMP) to a protein, resulting in modifications known as AMPylation and UMPylation. The protein is Protein nucleotidyltransferase YdiU of Escherichia coli (strain K12 / MC4100 / BW2952).